A 301-amino-acid chain; its full sequence is Putative dynamin-related protein 4A (301 aa).

A Dynamin-type G domain is found at 59 to 301 (GIQLPTIVVV…LIDGDIVGIL (243 aa)). The G1 motif stretch occupies residues 69–76 (GDQSSGKS). 69 to 76 (GDQSSGKS) contributes to the GTP binding site. The G2 motif stretch occupies residues 94 to 96 (CTR). Residues 168–171 (DLPG) are G3 motif. Residues 168 to 172 (DLPGI) and 237 to 240 (TKAD) each bind GTP. Residues 237–240 (TKAD) are G4 motif. Position 270 (Glu-270) is a region of interest, G5 motif.

It belongs to the TRAFAC class dynamin-like GTPase superfamily. Dynamin/Fzo/YdjA family.

The sequence is that of Putative dynamin-related protein 4A (DRP4A) from Arabidopsis thaliana (Mouse-ear cress).